Here is a 145-residue protein sequence, read N- to C-terminus: D-aminoacyl-tRNA deacylase (145 aa).

The Gly-cisPro motif, important for rejection of L-amino acids motif lies at 137–138 (GP).

Belongs to the DTD family. Homodimer.

It localises to the cytoplasm. The enzyme catalyses glycyl-tRNA(Ala) + H2O = tRNA(Ala) + glycine + H(+). It catalyses the reaction a D-aminoacyl-tRNA + H2O = a tRNA + a D-alpha-amino acid + H(+). In terms of biological role, an aminoacyl-tRNA editing enzyme that deacylates mischarged D-aminoacyl-tRNAs. Also deacylates mischarged glycyl-tRNA(Ala), protecting cells against glycine mischarging by AlaRS. Acts via tRNA-based rather than protein-based catalysis; rejects L-amino acids rather than detecting D-amino acids in the active site. By recycling D-aminoacyl-tRNA to D-amino acids and free tRNA molecules, this enzyme counteracts the toxicity associated with the formation of D-aminoacyl-tRNA entities in vivo and helps enforce protein L-homochirality. The protein is D-aminoacyl-tRNA deacylase of Shewanella pealeana (strain ATCC 700345 / ANG-SQ1).